Here is a 796-residue protein sequence, read N- to C-terminus: Disintegrin and metalloproteinase domain-containing protein B (796 aa).

The first 23 residues, 1–23, serve as a signal peptide directing secretion; the sequence is MKALSCLLAVIATAGSLFQHVDA. Residues 24-706 lie on the Extracellular side of the membrane; the sequence is RSHARDRLNN…VSDWVSRHKP (683 aa). Residues Asn-33, Asn-226, Asn-313, and Asn-407 are each glycosylated (N-linked (GlcNAc...) asparagine). In terms of domain architecture, Peptidase M12B spans 271 to 510; it reads RVALIGVVAD…HSILTNCLTT (240 aa). 3 disulfides stabilise this stretch: Cys-395–Cys-495, Cys-448–Cys-459, and Cys-580–Cys-600. His-431 is a Zn(2+) binding site. Residue Glu-432 is part of the active site. The Zn(2+) site is built by His-435 and His-441. One can recognise a Disintegrin domain in the interval 519 to 608; sequence GQQCGNGIVE…DCPRDTHSKN (90 aa). A helical membrane pass occupies residues 707–727; the sequence is IVIGVAVGVGCLLLLAILSCI. At 728–796 the chain is on the cytoplasmic side; sequence CGRSKKRRPR…PGRMPSTRYA (69 aa). Residues 737–796 form a disordered region; sequence RNRKMAPINMRPMPPVYNGWTGPPPNAESPGGHPQYNHVPPPINAPPPAYPGRMPSTRYA. The segment covering 775–786 has biased composition (pro residues); sequence VPPPINAPPPAY.

Zn(2+) is required as a cofactor.

It localises to the membrane. Its function is as follows. Probable zinc protease. This chain is Disintegrin and metalloproteinase domain-containing protein B (ADM-B), found in Arthroderma otae (strain ATCC MYA-4605 / CBS 113480) (Microsporum canis).